The primary structure comprises 297 residues: Aspartate carbamoyltransferase catalytic subunit (297 aa).

The carbamoyl phosphate site is built by Arg49 and Thr50. Lys77 is a binding site for L-aspartate. Carbamoyl phosphate contacts are provided by Arg99, His129, and Gln132. L-aspartate is bound by residues Arg162 and Arg215. Positions 256 and 257 each coordinate carbamoyl phosphate.

This sequence belongs to the aspartate/ornithine carbamoyltransferase superfamily. ATCase family. Heterododecamer (2C3:3R2) of six catalytic PyrB chains organized as two trimers (C3), and six regulatory PyrI chains organized as three dimers (R2).

It catalyses the reaction carbamoyl phosphate + L-aspartate = N-carbamoyl-L-aspartate + phosphate + H(+). Its pathway is pyrimidine metabolism; UMP biosynthesis via de novo pathway; (S)-dihydroorotate from bicarbonate: step 2/3. Functionally, catalyzes the condensation of carbamoyl phosphate and aspartate to form carbamoyl aspartate and inorganic phosphate, the committed step in the de novo pyrimidine nucleotide biosynthesis pathway. This is Aspartate carbamoyltransferase catalytic subunit from Legionella pneumophila (strain Paris).